We begin with the raw amino-acid sequence, 190 residues long: Shikimate kinase (190 aa).

22–27 (GSGKST) is an ATP binding site. A Mg(2+)-binding site is contributed by Ser26. Substrate-binding residues include Asp44, Arg68, and Gly90. Arg127 contributes to the ATP binding site. A substrate-binding site is contributed by Arg146.

This sequence belongs to the shikimate kinase family. Monomer. Requires Mg(2+) as cofactor.

It is found in the cytoplasm. The catalysed reaction is shikimate + ATP = 3-phosphoshikimate + ADP + H(+). It participates in metabolic intermediate biosynthesis; chorismate biosynthesis; chorismate from D-erythrose 4-phosphate and phosphoenolpyruvate: step 5/7. In terms of biological role, catalyzes the specific phosphorylation of the 3-hydroxyl group of shikimic acid using ATP as a cosubstrate. The sequence is that of Shikimate kinase from Microcystis aeruginosa (strain NIES-843 / IAM M-2473).